The primary structure comprises 564 residues: Forkhead transcription factor HCM1 (564 aa).

The tract at residues Asp-33–Thr-80 is disordered. Low complexity predominate over residues His-58 to Pro-67. A DNA-binding region (fork-head) is located at residues Lys-108–Tyr-199. Acidic residues predominate over residues Gln-224–Glu-241. The tract at residues Gln-224–Phe-246 is disordered. Thr-342 is modified (phosphothreonine). Residues Ser-401 to Pro-448 form a disordered region. Over residues Lys-402–Gln-413 the composition is skewed to polar residues. The span at Arg-432–Pro-441 shows a compositional bias: basic and acidic residues. Ser-496 is subject to Phosphoserine. The tract at residues Ser-536–Asn-564 is disordered. Polar residues predominate over residues His-554–Asn-564.

In terms of processing, phosphorylated by CDK1.

It is found in the cytoplasm. It localises to the nucleus. Functionally, transcription factor regulating the cell cycle specific transcription of a spindle pole body (SPB) calmodulin binding protein SPC110. Required for full induction of SPC110 transcription in late G1. Binds to DNA consensus sequence 5'-[AT]AA[TC]AAACAA[AT]-3'. Dosage dependent suppressor of calmodulin mutants which have specific defects in SPB assembly. This chain is Forkhead transcription factor HCM1 (HCM1), found in Saccharomyces cerevisiae (strain ATCC 204508 / S288c) (Baker's yeast).